The primary structure comprises 225 residues: Suppressor of cytokine signaling 3 (225 aa).

The interval 22–33 (LKTFSSKSEYQL) is kinase inhibitory region (KIR). The tract at residues 34-45 (VVNAVRKLQESG) is extended SH2 subdomain (ESS). In terms of domain architecture, SH2 spans 46–142 (FYWSAVTGGE…APSFPSPPTE (97 aa)). The segment covering 131–142 (PGAPSFPSPPTE) has biased composition (pro residues). The disordered stretch occupies residues 131 to 162 (PGAPSFPSPPTEPSSEVPEQPSAQPLPGSPPR). Over residues 143–155 (PSSEVPEQPSAQP) the composition is skewed to low complexity. One can recognise an SOCS box domain in the interval 177 to 224 (VLSRPLSSNVATLQHLCRKTVNGHLDSYEKVTQLPGPIREFLDQYDAP).

As to quaternary structure, interacts with multiple activated proteins of the tyrosine kinase signaling pathway including IGF1 receptor, insulin receptor and JAK2. Binding to JAK2 is mediated through the KIR and SH2 domains to a phosphorylated tyrosine residue within the JAK2 JH1 domain. Binds specific activated tyrosine residues of the leptin, EPO, IL12, GSCF and gp130 receptors. Interaction with CSNK1E stabilizes SOCS3 protein. Component of the probable ECS(SOCS3) E3 ubiquitin-protein ligase complex which contains CUL5, RNF7/RBX2, Elongin BC complex and SOCS3. Interacts with CUL5, RNF7, ELOB and ELOC. Interacts with CUL2. Interacts with FGFR3. Interacts with INSR. Interacts with BCL10; this interaction may interfere with BCL10-binding with PELI2. Interacts with NOD2 (via CARD domain); the interaction promotes NOD2 degradation. Post-translationally, phosphorylated on tyrosine residues after stimulation by the cytokines, IL-2, EPO or IGF1. Widely expressed with high expression in heart, placenta, skeletal muscle, peripheral blood leukocytes, fetal and adult lung, and fetal liver and kidney. Lower levels in thymus.

It functions in the pathway protein modification; protein ubiquitination. Its function is as follows. SOCS family proteins form part of a classical negative feedback system that regulates cytokine signal transduction. SOCS3 is involved in negative regulation of cytokines that signal through the JAK/STAT pathway. Inhibits cytokine signal transduction by binding to tyrosine kinase receptors including IL6ST/gp130, LIF, erythropoietin, insulin, IL12, GCSF and leptin receptors. Binding to JAK2 inhibits its kinase activity and regulates IL6 signaling. Suppresses fetal liver erythropoiesis. Regulates onset and maintenance of allergic responses mediated by T-helper type 2 cells. Probable substrate recognition component of a SCF-like ECS (Elongin BC-CUL2/5-SOCS-box protein) E3 ubiquitin-protein ligase complex which mediates the ubiquitination and subsequent proteasomal degradation of target proteins. The chain is Suppressor of cytokine signaling 3 from Homo sapiens (Human).